A 552-amino-acid polypeptide reads, in one-letter code: Urocanate hydratase (552 aa).

NAD(+) is bound by residues 49-50 (GG), glutamine 127, 173-175 (GMG), glutamate 193, arginine 198, 239-240 (NA), 260-264 (QTSAH), 270-271 (YV), and tyrosine 319. Residue cysteine 407 is part of the active site. Glycine 489 provides a ligand contact to NAD(+).

It belongs to the urocanase family. As to quaternary structure, composed of at least two subunits. The cofactor is NAD(+).

The protein resides in the cytoplasm. The enzyme catalyses 4-imidazolone-5-propanoate = trans-urocanate + H2O. The protein operates within amino-acid degradation; L-histidine degradation into L-glutamate; N-formimidoyl-L-glutamate from L-histidine: step 2/3. In terms of biological role, catalyzes the conversion of urocanate to 4-imidazolone-5-propionate. This chain is Urocanate hydratase, found in Bacillus subtilis (strain 168).